Here is a 662-residue protein sequence, read N- to C-terminus: DCC-interacting protein 13-beta (662 aa).

The interval 1-428 is required for RAB5A binding; it reads MPAVDKLLLE…NSDIEDDNIV (428 aa). The BAR domain occupies 3–268; it reads AVDKLLLEEA…ESVYTPDIDV (266 aa). The region spanning 277-375 is the PH domain; that stretch reads LIQKTGYLNL…WICAVNNISR (99 aa). In terms of domain architecture, PID spans 486–635; it reads SLLQQMFIVR…LMLSVPLTND (150 aa). Residues 642–662 are disordered; sequence NDQADDTGGSPSENRGAESEA.

In terms of assembly, homodimer. Homotetramer. Binds RAB5A/Rab5 through an N-terminal domain. This interaction is essential for its recruitment to endosomal membranes as well as its role in cell proliferation. Binds subunits of the NuRD/MeCP1 complex. Interacts with FSHR; interaction is independent of follicle stimulating hormone stimulation. Interacts with APPL1; the interaction is decreased by adiponectin in a time-dependent manner. Forms a complex comprising APPL1, RUVBL2, CTNNB1, HDAC1 and HDAC2; interaction reduces interaction between CTNNB1, HDAC1, HDAC2 and RUVBL2 leading to the decrease of deacetylase activity of this complex; affects the recruitment of repressive complexes to the Wnt target genes. Interacts (via BAR domain) with TBC1D1; interaction is dependent of TBC1D1 phosphorylation at 'Ser-235'; interaction diminishes the phosphorylation of TBC1D1 at 'Thr-596', resulting in inhibition of SLC2A4 translocation and glucose uptake. Interacts with ANXA2; targets APPL2 to endosomes and acting in parallel to RAB5A. Interacts with RAB31 (in GTP-bound form); interaction contributes to or enhances recruitment of APPL2 to the phagosomes; interaction enhances Fc-gamma receptor-mediated phagocytosis through PI3K/Akt signaling in macrophages. Interacts with PIK3R1; forms a complex with PIK3R1 and APPL1. Interacts (via BAR domain) with ADIPOR1; hinders the accessibility of APPL1 to ADIPOR1; negatively regulates adiponectin signaling; ADIPOQ dissociates this interaction and facilitates the recruitment of APPL1 to ADIPOR1. Interacts (via BAR domain) with ADIPOR2; ADIPOQ dissociates this interaction. In terms of tissue distribution, expressed in insulin-target tissues including skeletal muscle, liver, fat, and brain. Highly expressed in kidney and pancreas. Abundantly expressed in the ventromedial hypothalamus (VMH), barely detectable in the arcuate nucleus (ARC) and paraventricular nucleus (PVN) of the hypothalamus. Also expressed in pancreatic beta-cells.

The protein resides in the early endosome membrane. It is found in the nucleus. Its subcellular location is the cell membrane. It localises to the endosome membrane. The protein localises to the cytoplasm. The protein resides in the cytoplasmic vesicle. It is found in the phagosome. Its subcellular location is the cell projection. It localises to the ruffle. The protein localises to the ruffle membrane. The protein resides in the phagosome membrane. Functionally, multifunctional adapter protein that binds to various membrane receptors, nuclear factors and signaling proteins to regulate many processes, such as cell proliferation, immune response, endosomal trafficking and cell metabolism. Regulates signaling pathway leading to cell proliferation through interaction with RAB5A and subunits of the NuRD/MeCP1 complex. Plays a role in immune response by modulating phagocytosis, inflammatory and innate immune responses. In macrophages, enhances Fc-gamma receptor-mediated phagocytosis through interaction with RAB31 leading to activation of PI3K/Akt signaling. In response to LPS, modulates inflammatory responses by playing a key role on the regulation of TLR4 signaling and in the nuclear translocation of RELA/NF-kappa-B p65 and the secretion of pro- and anti-inflammatory cytokines. Also functions as a negative regulator of innate immune response via inhibition of AKT1 signaling pathway by forming a complex with APPL1 and PIK3R1. Plays a role in endosomal trafficking of TGFBR1 from the endosomes to the nucleus. Plays a role in cell metabolism by regulating adiponectin and insulin signaling pathways and adaptative thermogenesis. In muscle, negatively regulates adiponectin-simulated glucose uptake and fatty acid oxidation by inhibiting adiponectin signaling pathway through APPL1 sequestration thereby antagonizing APPL1 action. In muscles, negatively regulates insulin-induced plasma membrane recruitment of GLUT4 and glucose uptake through interaction with TBC1D1. Plays a role in cold and diet-induced adaptive thermogenesis by activating ventromedial hypothalamus (VMH) neurons throught AMPK inhibition which enhances sympathetic outflow to subcutaneous white adipose tissue (sWAT), sWAT beiging and cold tolerance. Also plays a role in other signaling pathways namely Wnt/beta-catenin, HGF and glucocorticoid receptor signaling. Positive regulator of beta-catenin/TCF-dependent transcription through direct interaction with RUVBL2/reptin resulting in the relief of RUVBL2-mediated repression of beta-catenin/TCF target genes by modulating the interactions within the beta-catenin-reptin-HDAC complex. May affect adult neurogenesis in hippocampus and olfactory system via regulating the sensitivity of glucocorticoid receptor. Required for fibroblast migration through HGF cell signaling. This is DCC-interacting protein 13-beta from Mus musculus (Mouse).